Here is a 921-residue protein sequence, read N- to C-terminus: MKLDPKVYQLEFFREKGFTRKQCRVCGEYFWTLNPDQEHCNDAPCVEYYFWELPRVRGLSVRDARRKFIEFFKRHGHEYVEPRPVVARWREDLYLTIASIVAFQPHVTSGIVPPPANPLVIVQPCIRLEDIDFVGLTIGRHLTSFEMGGHHAFNYPDKTVYWKEETVRFAFEFFTKELGIPEDMVTFKESWWEGGGNAGPSFEVTVGGLELATLVFMQYRVVDGKYEPMDIRVVDTGYGIERIAWFSQDVPTAFHAIYGELLDEFRKLLGVAEPPRELLWGAARAAGRLDPEDPESVERYYQVVAERAGLSIREARELLGREAALYTLLDHTKTIALMLGDGIVPSNTGEGYLARLVIRRALRTLRRLGADIELAVLVERQARYWGADYYPRLLSHLDYILRVVRLEEERYSKTLERGLREVTKLLKRKKKLSIDDLITLYDSHGVPPDMVAEAASKLGVNVDVPHNFYALVAKKHGASGAVAREVEEKPKLPRDIEEWARGFPATRRLFHENPYAREFTANLLGVRGSHVILDATLFYPTGGGQLHDTGVLRLCGEEYRVLRVEKVGDVVVHVLDREPSCSSGEAWGRIDWDRRYRLMRHHTAVHVLLGAARRVLGDHVWQAGAEKTPEKARLDITHYELPSREEIRKIEELANSAILARIHVDIEEIDRNTAEKLYGFRIYQGGVPMTPRLRIVRIGDWDVEACFGTHVANTAEIGAIKIVNVEKLQDGVVRFEIVAGSEVARYAASLEDKLDTIASIVGGGRGEAVKRVEKLAEELKEAKRQVSRLRSFLADMLVKSVKATAKSIDGVKVYVMTEELPDENIYREVMLKLSREEPDSITIAVIRRGEDLLMEIGAGSKAAKRVDLRAVAKQLASKGLRGGGKPSHITLYGRGLAEKASKVASEVVEVIASLVSRAGTA.

4 residues coordinate Zn(2+): His602, His606, Cys706, and His710.

This sequence belongs to the class-II aminoacyl-tRNA synthetase family. The cofactor is Zn(2+).

The protein localises to the cytoplasm. The catalysed reaction is tRNA(Ala) + L-alanine + ATP = L-alanyl-tRNA(Ala) + AMP + diphosphate. Catalyzes the attachment of alanine to tRNA(Ala) in a two-step reaction: alanine is first activated by ATP to form Ala-AMP and then transferred to the acceptor end of tRNA(Ala). Also edits incorrectly charged Ser-tRNA(Ala) and Gly-tRNA(Ala) via its editing domain. This chain is Alanine--tRNA ligase, found in Hyperthermus butylicus (strain DSM 5456 / JCM 9403 / PLM1-5).